Consider the following 146-residue polypeptide: 3-hydroxyacyl-[acyl-carrier-protein] dehydratase FabZ (146 aa).

Residue His49 is part of the active site.

The protein belongs to the thioester dehydratase family. FabZ subfamily.

It is found in the cytoplasm. It catalyses the reaction a (3R)-hydroxyacyl-[ACP] = a (2E)-enoyl-[ACP] + H2O. Involved in unsaturated fatty acids biosynthesis. Catalyzes the dehydration of short chain beta-hydroxyacyl-ACPs and long chain saturated and unsaturated beta-hydroxyacyl-ACPs. The polypeptide is 3-hydroxyacyl-[acyl-carrier-protein] dehydratase FabZ (Ectopseudomonas mendocina (strain ymp) (Pseudomonas mendocina)).